Reading from the N-terminus, the 70-residue chain is Protein SlyX homolog (70 aa).

Belongs to the SlyX family.

This Shewanella putrefaciens (strain CN-32 / ATCC BAA-453) protein is Protein SlyX homolog.